The sequence spans 2099 residues: Dedicator of cytokinesis protein 8 (2099 aa).

A phosphoserine mark is found at serine 20, serine 139, and serine 451. In terms of domain architecture, C2 DOCK-type spans 560–729 (RNLLYVYPQR…GVFNIEVQAV (170 aa)). 4 positions are modified to phosphoserine: serine 904, serine 936, serine 1145, and serine 1243. The DOCKER domain occupies 1632–2066 (KSYQASPDLR…LRPMIERKIP (435 aa)). Serine 2087 is subject to Phosphoserine.

This sequence belongs to the DOCK family. As to quaternary structure, interacts (via DOCKER domain) with GTPase CDC42; the interaction activates CDC42 by exchanging GDP for GTP. The unphosphorylated form interacts (via DOCKER domain) with LRCH1 (via LRR repeats); the interaction prevents the association between DOCK8 and CDC42. Interacts with CCDC88B. Post-translationally, in response to chemokine CXCL12/SDF-1-alpha stimulation, phosphorylated by PRKCA/PKC-alpha which promotes DOCK8 dissociation from LRCH1. Expressed in peripheral blood mononuclear cells (PBMCs).

It is found in the cytoplasm. It localises to the cell membrane. The protein localises to the cell projection. Its subcellular location is the lamellipodium membrane. Functionally, guanine nucleotide exchange factor (GEF) which specifically activates small GTPase CDC42 by exchanging bound GDP for free GTP. During immune responses, required for interstitial dendritic cell (DC) migration by locally activating CDC42 at the leading edge membrane of DC. Required for CD4(+) T-cell migration in response to chemokine stimulation by promoting CDC42 activation at T cell leading edge membrane. Is involved in NK cell cytotoxicity by controlling polarization of microtubule-organizing center (MTOC), and possibly regulating CCDC88B-mediated lytic granule transport to MTOC during cell killing. This is Dedicator of cytokinesis protein 8 (DOCK8) from Homo sapiens (Human).